We begin with the raw amino-acid sequence, 364 residues long: Capsular polysaccharide phosphotransferase fcs1 (364 aa).

Belongs to the stealth family.

Its function is as follows. Part of a group II capsule biosynthesis locus. This chain is Capsular polysaccharide phosphotransferase fcs1 (fcs1), found in Haemophilus influenzae.